We begin with the raw amino-acid sequence, 176 residues long: MMNLWKDLEPGPNPPDVVYAVIEIPRGSRNKYEYDEERGFFKLDRVLYSPFHYPLDYGFIPRTLYDDGDPLDILVIMQDPTFPGCVIEARPIGLMKMLDDSDQDDKVLAVPTEDPRFKDVKDLDDVPKHLLDEIAHMFSEYKRLEGKETEVLGWEGADAAKEAIVHAIELYEEEHG.

The substrate site is built by Lys31, Arg45, and Tyr57. 3 residues coordinate Mg(2+): Asp67, Asp72, and Asp104. Position 141 (Tyr141) interacts with substrate.

It belongs to the PPase family. Homohexamer. It depends on Mg(2+) as a cofactor.

The protein resides in the cytoplasm. It carries out the reaction diphosphate + H2O = 2 phosphate + H(+). In terms of biological role, catalyzes the hydrolysis of inorganic pyrophosphate (PPi) forming two phosphate ions. This chain is Inorganic pyrophosphatase, found in Methanopyrus kandleri (strain AV19 / DSM 6324 / JCM 9639 / NBRC 100938).